A 354-amino-acid chain; its full sequence is Inactive ADP-ribosyltransferase ARH2 (354 aa).

A Phosphoserine modification is found at Ser-27.

This sequence belongs to the ADP-ribosylglycohydrolase family.

It is found in the cytoplasm. Its subcellular location is the myofibril. The protein resides in the sarcomere. Required for myofibril assembly and outgrowth of the cardiac chambers in the developing heart. Appears to be catalytically inactive, showing no activity against O-acetyl-ADP-ribose. This chain is Inactive ADP-ribosyltransferase ARH2 (ADPRHL1), found in Bos taurus (Bovine).